A 224-amino-acid chain; its full sequence is uncharacterized protein (224 aa).

S-adenosyl-L-methionine-binding residues include glycine 177, isoleucine 197, and leucine 206.

This sequence belongs to the class IV-like SAM-binding methyltransferase superfamily. RNA methyltransferase TrmH family.

This is an uncharacterized protein from Archaeoglobus fulgidus (strain ATCC 49558 / DSM 4304 / JCM 9628 / NBRC 100126 / VC-16).